The chain runs to 792 residues: Zinc finger CCCH domain-containing protein 11A (792 aa).

C3H1-type zinc fingers lie at residues 2 to 29, 31 to 57, and 60 to 87; these read PNQG…HCEA, LGNE…HMEI, and KRSE…HTRS. Disordered stretches follow at residues 103–191, 223–331, and 345–443; these read PTVP…VHNG, KKMK…KAGE, and ASQK…RSMQ. Position 108 is a phosphoserine (Ser-108). Residues Lys-114 and Lys-124 each participate in a glycyl lysine isopeptide (Lys-Gly) (interchain with G-Cter in SUMO2) cross-link. Residues 115-135 are compositionally biased toward polar residues; it reads TSQLTVQQSKLSVQSNPSPQL. Ser-132 is modified (phosphoserine). A Glycyl lysine isopeptide (Lys-Gly) (interchain with G-Cter in SUMO2) cross-link involves residue Lys-140. A phosphoserine mark is found at Ser-149, Ser-171, and Ser-289. Acidic residues predominate over residues 160-175; the sequence is ADDDEDDDDQFSEEGD. Composition is skewed to basic and acidic residues over residues 308–331 and 345–360; these read KKVE…KAGE and ASQK…KAEE. Residues 338–360 adopt a coiled-coil conformation; that stretch reads EEILLERASQKRGELQTKLKAEE. At Ser-346 the chain carries Phosphoserine. The segment covering 367–376 has biased composition (low complexity); sequence SPSGTKSSSS. Composition is skewed to basic and acidic residues over residues 393–405 and 431–443; these read QQEM…KKDT and QPEE…RSMQ. Lys-454 participates in a covalent cross-link: Glycyl lysine isopeptide (Lys-Gly) (interchain with G-Cter in SUMO2). 2 disordered regions span residues 458–531 and 545–571; these read ALRV…PTKL and QRLQ…ASSY. Residues 461–473 are compositionally biased toward polar residues; sequence VQQSSESSGNSRP. Composition is skewed to basic and acidic residues over residues 492–501 and 545–558; these read GVKEEKKCGL and QRLQ…KEKA. Lys-601 participates in a covalent cross-link: Glycyl lysine isopeptide (Lys-Gly) (interchain with G-Cter in SUMO2). Residues 690-750 form a disordered region; that stretch reads LSEDKPVTMS…SASTGKPPLS (61 aa). A compositionally biased stretch (polar residues) spans 698–715; that stretch reads MSETENPKDSSVLSSAQA. A compositionally biased stretch (low complexity) spans 717-730; sequence SEPLLPEGSGPSSS.

As to quaternary structure, interacts with TREX complex components THOC2, DDX39 and POLDIP3; the interactions are ATP-dependent. Interacts with PABPN1; this interaction retains ZC3H11A in nuclear speckles. Interacts with KPNA3.

The protein localises to the nucleus speckle. Through its association with TREX complex components, may participate in the export and post-transcriptional coordination of selected mRNA transcripts, including those required to maintain the metabolic processes in embryonic cells. Binds RNA. In Mus musculus (Mouse), this protein is Zinc finger CCCH domain-containing protein 11A (Zc3h11a).